The following is a 203-amino-acid chain: Large ribosomal subunit protein bL25 (203 aa).

This sequence belongs to the bacterial ribosomal protein bL25 family. CTC subfamily. Part of the 50S ribosomal subunit; part of the 5S rRNA/L5/L18/L25 subcomplex. Contacts the 5S rRNA. Binds to the 5S rRNA independently of L5 and L18.

In terms of biological role, this is one of the proteins that binds to the 5S RNA in the ribosome where it forms part of the central protuberance. In Rickettsia peacockii (strain Rustic), this protein is Large ribosomal subunit protein bL25.